Consider the following 179-residue polypeptide: Transmembrane protein 196 (179 aa).

Helical transmembrane passes span 11 to 31, 44 to 61, 67 to 87, and 100 to 120; these read LLVL…VGAV, LGDS…ILCA, LVMI…ILNF, and LYPL…GCTL.

The protein localises to the cytoplasm. The protein resides in the membrane. In terms of biological role, acts as a tumor suppressor in lung cancer. Inhibits tumor cell growth by inhibiting cell proliferation and migration and promoting cell apoptosis. Inhibits metastasis of lung cancer by suppressing beta-catenin expression in the Wnt/beta-catenin signaling pathway. The chain is Transmembrane protein 196 (TMEM196) from Pongo abelii (Sumatran orangutan).